We begin with the raw amino-acid sequence, 126 residues long: TFIAIKPDGVQRGLCGEVMKFIQPMKQHYLDLKDMPFYAGLCKYMASGPVFAMVWEGEGIVKMMLGETNPADSKPGSIRGDFCINIGRNIIHGSDTLENAKMEIGLWFKGEEFVAYAEKAKAWVYE.

ATP is bound by residues Lys-6, Phe-37, Thr-68, Arg-79, and Asn-89. His-92 acts as the Pros-phosphohistidine intermediate in catalysis.

It belongs to the NDK family. Mg(2+) is required as a cofactor.

The protein resides in the cytoplasm. It is found in the nucleus. Its subcellular location is the cell projection. The protein localises to the lamellipodium. It localises to the ruffle. It catalyses the reaction a 2'-deoxyribonucleoside 5'-diphosphate + ATP = a 2'-deoxyribonucleoside 5'-triphosphate + ADP. The enzyme catalyses a ribonucleoside 5'-diphosphate + ATP = a ribonucleoside 5'-triphosphate + ADP. Major role in the synthesis of nucleoside triphosphates other than ATP. In Macruronus magellanicus (Patagonian grenadier), this protein is Nucleoside diphosphate kinase B (nme2).